Consider the following 37-residue polypeptide: Large ribosomal subunit protein bL36 (37 aa).

The protein belongs to the bacterial ribosomal protein bL36 family.

In Histophilus somni (strain 129Pt) (Haemophilus somnus), this protein is Large ribosomal subunit protein bL36.